The following is a 1221-amino-acid chain: Reverse gyrase subunit B (1221 aa).

The segment at 56–97 adopts an RG N-terminal-type zinc-finger fold; that stretch reads NEPVAIFGSSCVLCGGDCSSVRLTSRIGICERCLPVDTETLR. 4 residues coordinate Zn(2+): Cys66, Cys69, Cys85, and Cys88. Residues Gln161 and 178–185 each bind ATP; that span reads APTGTGKT. The Helicase ATP-binding domain occupies 165-400; that stretch reads TRRLVKGCSF…AVVRELFDFE (236 aa). The short motif at 284 to 287 is the DEAD box element; that stretch reads DDVD. Residues 424-600 enclose the Helicase C-terminal domain; the sequence is AVERIVRKAG…PLSLNTLMKL (177 aa). One can recognise a Toprim domain in the interval 779 to 935; sequence SALMIVESPN…QVYRTEFHEV (157 aa). Residue Glu785 participates in Mg(2+) binding. Residues 856–882 form an RG C-terminal-type zinc finger; the sequence is LGRCSECGEQVVGSEECPNCGGEVELK. Cys859, Cys862, Cys872, and Cys875 together coordinate Zn(2+). Residue Asp904 participates in Mg(2+) binding. The 269-residue stretch at 953 to 1221 folds into the Topo IA-type catalytic domain; the sequence is DAGRVSAQIL…MLHLAGVSGR (269 aa).

This sequence in the C-terminal section; belongs to the type IA topoisomerase family. The protein in the N-terminal section; belongs to the DEAD box helicase family. DDVD subfamily. As to quaternary structure, heterodimer of an RgyrA and RgyrB subunit. The topoisomerase domain is shared between the two subunits. The cofactor is Zn(2+). Mg(2+) is required as a cofactor. Post-translationally, the N-terminus is partially blocked.

It is found in the cytoplasm. The enzyme catalyses ATP + H2O = ADP + phosphate + H(+). In terms of biological role, modifies the topological state of DNA by introducing positive supercoils in an ATP-dependent process; dATP also allows positive supercoiling. Increases the linking number in steps of +1. Only this subunit binds ATP, it does so in a DNA- and RgyA-independent manner. Hydrolyzes ATP only in the presence of DNA. The RgyA subunit transiently cleaves a single DNA strand and remains covalently bound to the 5' DNA end probably through a tyrosine residue. It changes linking number in steps of one, and nicks DNA preferentially at 5'-CNNN | 3'-sites with a strong preference for 4 pyrimidine residues. There are about 1000 heterodimers per cell. May be involved in rewinding the DNA strands in the regions of the chromosome that have opened up to allow transcription or replication. Functionally, this subunit expressed in E.coli only has DNA-dependent ATPase activity at 80 degrees Celsius. Reverse gyrase activity is reconstituted after incubation at 80 degrees Celsius for 5 minutes, positive supercoiling requires ATP and Mg(2+). In the presence of ATP it binds and nicks substrate but does not make closed product. This is Reverse gyrase subunit B from Methanopyrus kandleri (strain AV19 / DSM 6324 / JCM 9639 / NBRC 100938).